The sequence spans 258 residues: UDP-N-acetylenolpyruvoylglucosamine reductase (258 aa).

Residue Arg142 is part of the active site. Ser184 acts as the Proton donor in catalysis. The active site involves Glu254.

This sequence belongs to the MurB family. FAD serves as cofactor.

The protein resides in the cytoplasm. It carries out the reaction UDP-N-acetyl-alpha-D-muramate + NADP(+) = UDP-N-acetyl-3-O-(1-carboxyvinyl)-alpha-D-glucosamine + NADPH + H(+). It functions in the pathway cell wall biogenesis; peptidoglycan biosynthesis. In terms of biological role, cell wall formation. The polypeptide is UDP-N-acetylenolpyruvoylglucosamine reductase (Campylobacter jejuni (strain RM1221)).